A 120-amino-acid polypeptide reads, in one-letter code: Immunoglobulin kappa variable 2-30 (120 aa).

A signal peptide spans 1–20; sequence MRLPAQLLGLLMLWVPGSSG. A framework-1 region spans residues 21 to 43; sequence DVVMTQSPLSLPVTLGQPASISC. Positions 21 to 120 constitute an Ig-like domain; the sequence is DVVMTQSPLS…YYCMQGTHWP (100 aa). A disulfide bridge links cysteine 43 with cysteine 113. The segment at 44–59 is complementarity-determining-1; it reads RSSQSLVYSDGNTYLN. The tract at residues 60–74 is framework-2; the sequence is WFQQRPGQSPRRLIY. Residues 75–81 form a complementarity-determining-2 region; sequence KVSNRDS. Residues 82-113 form a framework-3 region; that stretch reads GVPDRFSGSGSGTDFTLKISRVEAEDVGVYYC. Residues 114-120 form a complementarity-determining-3 region; it reads MQGTHWP.

As to quaternary structure, immunoglobulins are composed of two identical heavy chains and two identical light chains; disulfide-linked.

Its subcellular location is the secreted. It is found in the cell membrane. In terms of biological role, v region of the variable domain of immunoglobulin light chains that participates in the antigen recognition. Immunoglobulins, also known as antibodies, are membrane-bound or secreted glycoproteins produced by B lymphocytes. In the recognition phase of humoral immunity, the membrane-bound immunoglobulins serve as receptors which, upon binding of a specific antigen, trigger the clonal expansion and differentiation of B lymphocytes into immunoglobulins-secreting plasma cells. Secreted immunoglobulins mediate the effector phase of humoral immunity, which results in the elimination of bound antigens. The antigen binding site is formed by the variable domain of one heavy chain, together with that of its associated light chain. Thus, each immunoglobulin has two antigen binding sites with remarkable affinity for a particular antigen. The variable domains are assembled by a process called V-(D)-J rearrangement and can then be subjected to somatic hypermutations which, after exposure to antigen and selection, allow affinity maturation for a particular antigen. The chain is Immunoglobulin kappa variable 2-30 from Homo sapiens (Human).